The sequence spans 235 residues: Protein fmp52-1, mitochondrial (235 aa).

The transit peptide at 1–36 directs the protein to the mitochondrion; the sequence is MANTALIGCTGMVGSFILNNLLAHPSVARVDTISRR.

The protein belongs to the FMP52 family.

It localises to the mitochondrion outer membrane. The chain is Protein fmp52-1, mitochondrial (fmp521) from Aspergillus oryzae (strain ATCC 42149 / RIB 40) (Yellow koji mold).